The sequence spans 746 residues: Dystrobrevin alpha (746 aa).

An interaction with MAGEE1 region spans residues 1–288 (MIEDSGKRGN…SHSNQHQMKE (288 aa)). A ZZ-type zinc finger spans residues 238-294 (FHPVECSYCHSESMMGFRYRCQQCHNYQLCQDCFWRGHAGGSHSNQHQMKEYTSWKS). Zn(2+) is bound by residues C243, C246, C258, C261, C267, C270, H280, and H284. The tract at residues 397 to 447 (DRLADEHVLIGLYVNMLRNDPPCMLESSNRLDEEHRLIARYAARLAAESSS) is syntrophin-binding region. Residues 458 to 557 (DISFTIDANK…KLLKEEELKQ (100 aa)) are a coiled coil. Disordered stretches follow at residues 555 to 577 (LKQG…SRPI), 646 to 667 (ETES…APSP), and 684 to 721 (YIHG…VRQL). Residues 563–576 (SSPRSSPSHTISRP) are compositionally biased toward low complexity. Position 666 is a phosphoserine (S666).

This sequence belongs to the dystrophin family. Dystrobrevin subfamily. In terms of assembly, interacts with dystrophin, utrophin and the syntrophins SNTA1, SNTB1, SNTB2, SNTG1 and SNTG2. Binds dystrobrevin binding protein 1. Interacts with MAGEE1. Interacts with Ctnnal1. The interaction is required for correct localization of both Ctnnal1 and Dtna. Does not interact with utrophin. As to quaternary structure, does not interact with syntrophin. Post-translationally, phosphorylation of isoform 2 on tyrosine kinase substrate domain present in the C-terminus. Expressed in skeletal muscle, heart, lung and brain. Sarcolemma and neuromuscular junction in skeletal muscle. Isoform 2 is restricted to the neuromuscular junction. Isoforms 5 and 6 are only expressed in muscle.

The protein localises to the cytoplasm. The protein resides in the synapse. It is found in the cell membrane. Involved in synapse maturation and required for normal muscle function. The sequence is that of Dystrobrevin alpha (Dtna) from Mus musculus (Mouse).